Reading from the N-terminus, the 189-residue chain is Elongation factor P (189 aa).

It belongs to the elongation factor P family.

The protein resides in the cytoplasm. It participates in protein biosynthesis; polypeptide chain elongation. Functionally, involved in peptide bond synthesis. Stimulates efficient translation and peptide-bond synthesis on native or reconstituted 70S ribosomes in vitro. Probably functions indirectly by altering the affinity of the ribosome for aminoacyl-tRNA, thus increasing their reactivity as acceptors for peptidyl transferase. In Rhizobium etli (strain CIAT 652), this protein is Elongation factor P.